A 736-amino-acid chain; its full sequence is Myotubularin-related protein 12 (736 aa).

The Myotubularin phosphatase domain occupies Tyr182–Phe558. A disordered region spans residues Ser672–Gly691.

Belongs to the protein-tyrosine phosphatase family. Non-receptor class myotubularin subfamily. As to quaternary structure, heterodimer with lipid phosphatase mtm1. In skeletal muscles, the interaction stabilizes both mtmr12 and mtm1 protein levels.

The protein resides in the cytoplasm. The protein localises to the sarcoplasmic reticulum. It localises to the myofibril. Its subcellular location is the sarcomere. Its function is as follows. Acts as an adapter for the myotubularin phosphatase mtm1 to regulate mtm1 protein stability and possibly its intracellular location. By stabilizing mtm1 protein levels, required for skeletal muscle maintenance but not for myogenesis. In skeletal muscle cells, does not regulate mtm1 subcellular localization. The sequence is that of Myotubularin-related protein 12 (mtmr12) from Danio rerio (Zebrafish).